Here is a 390-residue protein sequence, read N- to C-terminus: 3-ketoacyl-CoA thiolase (390 aa).

Cys95 (acyl-thioester intermediate) is an active-site residue. Residues His346 and Cys376 each act as proton acceptor in the active site.

It belongs to the thiolase-like superfamily. Thiolase family. As to quaternary structure, heterotetramer of two alpha chains (FadB) and two beta chains (FadA).

Its subcellular location is the cytoplasm. The enzyme catalyses an acyl-CoA + acetyl-CoA = a 3-oxoacyl-CoA + CoA. It functions in the pathway lipid metabolism; fatty acid beta-oxidation. In terms of biological role, catalyzes the final step of fatty acid oxidation in which acetyl-CoA is released and the CoA ester of a fatty acid two carbons shorter is formed. This Psychrobacter arcticus (strain DSM 17307 / VKM B-2377 / 273-4) protein is 3-ketoacyl-CoA thiolase.